A 400-amino-acid polypeptide reads, in one-letter code: Subtilisin-like protease 7 (400 aa).

Residues 1–20 (MGFITKAIPLALAAMSVVNG) form the signal peptide. Positions 21-119 (AEILETRAGV…IERDARVQIN (99 aa)) are excised as a propeptide. In terms of domain architecture, Inhibitor I9 spans 36–118 (KYIVIMNDGV…YIERDARVQI (83 aa)). Positions 129–400 (SWGLARVGSR…GKLINNGSGK (272 aa)) constitute a Peptidase S8 domain. Residues aspartate 161 and histidine 192 each act as charge relay system in the active site. N-linked (GlcNAc...) asparagine glycans are attached at residues asparagine 222 and asparagine 252. Serine 346 functions as the Charge relay system in the catalytic mechanism. Asparagine 396 carries an N-linked (GlcNAc...) asparagine glycan.

This sequence belongs to the peptidase S8 family.

Its subcellular location is the secreted. Secreted subtilisin-like serine protease with keratinolytic activity that contributes to pathogenicity. This Arthroderma otae (strain ATCC MYA-4605 / CBS 113480) (Microsporum canis) protein is Subtilisin-like protease 7 (SUB7).